The primary structure comprises 150 residues: Single-stranded DNA-binding protein 1 (150 aa).

The 104-residue stretch at 1–104 folds into the SSB domain; that stretch reads MINNVVLVGR…VVADTFQMLE (104 aa). Positions 103 to 120 are enriched in polar residues; the sequence is LESNKTQGQQTSKPQAQN. The segment at 103 to 150 is disordered; the sequence is LESNKTQGQQTSKPQAQNKKPQAPDPFKAPAADPFAGGTEISDDDLPF. Residues 121-138 show a composition bias toward low complexity; sequence KKPQAPDPFKAPAADPFA. Positions 145–150 match the Important for interaction with partner proteins motif; the sequence is DDDLPF.

As to quaternary structure, homotetramer.

Its function is as follows. Plays an important role in DNA replication, recombination and repair. Binds to ssDNA and to an array of partner proteins to recruit them to their sites of action during DNA metabolism. In Lactococcus lactis subsp. lactis (strain IL1403) (Streptococcus lactis), this protein is Single-stranded DNA-binding protein 1 (ssb1).